Consider the following 498-residue polypeptide: Angiopoietin-1 (498 aa).

The N-terminal stretch at 1 to 19 (MTVFLSFAFFAAILTHIGC) is a signal peptide. The stretch at 81-119 (QKLQHLEHVMENYTQWLQKLENYIVENMKSEMAQIQQNA) forms a coiled coil. 5 N-linked (GlcNAc...) asparagine glycosylation sites follow: asparagine 92, asparagine 122, asparagine 154, asparagine 243, and asparagine 295. Residues 153–261 (LNQTSRLEIQ…LELMDTVHNL (109 aa)) are a coiled coil. The Fibrinogen C-terminal domain occupies 277 to 497 (REEEKPFRDC…STTMMIRPLD (221 aa)). Disulfide bonds link cysteine 286/cysteine 315 and cysteine 439/cysteine 452.

As to quaternary structure, homooligomer. Interacts with TEK/TIE2. Interacts with SVEP1/polydom. Interacts with THBD; this interaction significantly inhibits the generation of activated PC and TAFIa/CPB2 by the thrombin/thrombomodulin complex.

It localises to the secreted. In terms of biological role, binds and activates TEK/TIE2 receptor by inducing its dimerization and tyrosine phosphorylation. Plays an important role in the regulation of angiogenesis, endothelial cell survival, proliferation, migration, adhesion and cell spreading, reorganization of the actin cytoskeleton, but also maintenance of vascular quiescence. Required for normal angiogenesis and heart development during embryogenesis. After birth, activates or inhibits angiogenesis, depending on the context. Inhibits angiogenesis and promotes vascular stability in quiescent vessels, where endothelial cells have tight contacts. In quiescent vessels, ANGPT1 oligomers recruit TEK to cell-cell contacts, forming complexes with TEK molecules from adjoining cells, and this leads to preferential activation of phosphatidylinositol 3-kinase and the AKT1 signaling cascades. In migrating endothelial cells that lack cell-cell adhesions, ANGT1 recruits TEK to contacts with the extracellular matrix, leading to the formation of focal adhesion complexes, activation of PTK2/FAK and of the downstream kinases MAPK1/ERK2 and MAPK3/ERK1, and ultimately to the stimulation of sprouting angiogenesis. Mediates blood vessel maturation/stability. Implicated in endothelial developmental processes later and distinct from that of VEGF. Appears to play a crucial role in mediating reciprocal interactions between the endothelium and surrounding matrix and mesenchyme. This is Angiopoietin-1 (Angpt1) from Mus musculus (Mouse).